A 511-amino-acid polypeptide reads, in one-letter code: Lysine--tRNA ligase (511 aa).

2 residues coordinate Mg(2+): E422 and E429.

This sequence belongs to the class-II aminoacyl-tRNA synthetase family. Homodimer. Requires Mg(2+) as cofactor.

The protein localises to the cytoplasm. The catalysed reaction is tRNA(Lys) + L-lysine + ATP = L-lysyl-tRNA(Lys) + AMP + diphosphate. This Chlorobaculum tepidum (strain ATCC 49652 / DSM 12025 / NBRC 103806 / TLS) (Chlorobium tepidum) protein is Lysine--tRNA ligase.